We begin with the raw amino-acid sequence, 305 residues long: uncharacterized protein (305 aa).

Transmembrane regions (helical) follow at residues 11 to 31 (LLLA…KAAL), 37 to 57 (LLFA…VALP), 70 to 90 (IYLV…TIGL), 97 to 117 (LFSA…WLWL), 126 to 146 (VIGL…GFGG), 148 to 168 (ISVI…LGTV), 180 to 200 (IWMV…SGFW), 217 to 237 (LLFI…TLVG), 244 to 264 (VASY…IFLH), and 265 to 285 (EPLT…ICLV). 2 EamA domains span residues 18–141 (IMWG…VISA) and 161–287 (VSWA…LVNT).

Belongs to the EamA transporter family.

Its subcellular location is the cell membrane. This is an uncharacterized protein from Bacillus subtilis (strain 168).